The sequence spans 397 residues: ATP-dependent RNA helicase RhlB (397 aa).

A Q motif motif is present at residues 8–36 (TRFHDFNLAPELMHAIQDLGFPYCTPIQA). The region spanning 39-219 (LGFTLKGKDA…KQWTTDPSIV (181 aa)) is the Helicase ATP-binding domain. 52-59 (AQTGTGKT) serves as a coordination point for ATP. The short motif at 165-168 (DEAD) is the DEAD box element. The region spanning 242–392 (DKYKLLYNLV…TPPTHLLRAV (151 aa)) is the Helicase C-terminal domain.

The protein belongs to the DEAD box helicase family. RhlB subfamily. As to quaternary structure, component of the RNA degradosome, which is a multiprotein complex involved in RNA processing and mRNA degradation.

It is found in the cytoplasm. It carries out the reaction ATP + H2O = ADP + phosphate + H(+). DEAD-box RNA helicase involved in RNA degradation. Has RNA-dependent ATPase activity and unwinds double-stranded RNA. The sequence is that of ATP-dependent RNA helicase RhlB from Pseudomonas syringae pv. tomato (strain ATCC BAA-871 / DC3000).